The primary structure comprises 62 residues: Sperm histone (62 aa).

A disordered region spans residues 1 to 62 (MARYRRSRTR…GSRRRRRRRY (62 aa)). A Phosphothreonine modification is found at Thr9.

The protein belongs to the protamine P1 family. In terms of tissue distribution, testis.

Its subcellular location is the nucleus. It is found in the chromosome. Its function is as follows. Protamines substitute for histones in the chromatin of sperm during the haploid phase of spermatogenesis. They compact sperm DNA into a highly condensed, stable and inactive complex. This chain is Sperm histone, found in Gallus gallus (Chicken).